Here is a 355-residue protein sequence, read N- to C-terminus: Methylthioribose-1-phosphate isomerase (355 aa).

Substrate is bound by residues 53–55 (RGA), R96, and Q205. The Proton donor role is filled by D246. 256–257 (NK) serves as a coordination point for substrate.

This sequence belongs to the eIF-2B alpha/beta/delta subunits family. MtnA subfamily.

The catalysed reaction is 5-(methylsulfanyl)-alpha-D-ribose 1-phosphate = 5-(methylsulfanyl)-D-ribulose 1-phosphate. It participates in amino-acid biosynthesis; L-methionine biosynthesis via salvage pathway; L-methionine from S-methyl-5-thio-alpha-D-ribose 1-phosphate: step 1/6. Its function is as follows. Catalyzes the interconversion of methylthioribose-1-phosphate (MTR-1-P) into methylthioribulose-1-phosphate (MTRu-1-P). In Thermosynechococcus vestitus (strain NIES-2133 / IAM M-273 / BP-1), this protein is Methylthioribose-1-phosphate isomerase.